The chain runs to 381 residues: L-lactate dehydrogenase (381 aa).

Residues 1 to 380 (MIISSASDYR…KPEALVDLSK (380 aa)) form the FMN hydroxy acid dehydrogenase domain. Tyrosine 24 is a substrate binding site. FMN is bound by residues serine 106 and glutamine 127. Tyrosine 129 contributes to the substrate binding site. FMN is bound at residue threonine 155. Residue arginine 164 participates in substrate binding. Lysine 251 contributes to the FMN binding site. The active-site Proton acceptor is histidine 275. Arginine 278 is a substrate binding site. FMN is bound at residue 306 to 330 (DSGIRNGLDIVRMLALGADATMLGR).

The protein belongs to the FMN-dependent alpha-hydroxy acid dehydrogenase family. Requires FMN as cofactor.

It localises to the cell inner membrane. It carries out the reaction (S)-lactate + A = pyruvate + AH2. In terms of biological role, catalyzes the conversion of L-lactate to pyruvate. Is coupled to the respiratory chain. This chain is L-lactate dehydrogenase, found in Haemophilus influenzae (strain PittEE).